The following is a 312-amino-acid chain: Magnesium protoporphyrin IX methyltransferase, chloroplastic (312 aa).

The transit peptide at 1–39 (MPFAPSLLSSSSSVSQFLPRFPNATRFNVTPRSRAATVV) directs the protein to the chloroplast.

It belongs to the class I-like SAM-binding methyltransferase superfamily. Magnesium protoporphyrin O-methyltransferase family.

It localises to the plastid. Its subcellular location is the chloroplast membrane. The protein resides in the chloroplast thylakoid membrane. The enzyme catalyses Mg-protoporphyrin IX + S-adenosyl-L-methionine = Mg-protoporphyrin IX 13-monomethyl ester + S-adenosyl-L-homocysteine. The protein operates within porphyrin-containing compound metabolism; chlorophyll biosynthesis. Its activity is regulated as follows. Regulated by the folate status via an increased concentration of S-adenosyl-homocysteine (AdoHcy), a potent inhibitor of most AdoMet-dependent methyltransferases. Functionally, converts Mg-protoporphyrin IX to Mg-protoporphyrin IX methylester using S-adenosyl-L-methionine as a cofactor. Involved in chloroplast-to-nucleus signaling by acting as a negative effector of nuclear photosynthetic gene expression. This is Magnesium protoporphyrin IX methyltransferase, chloroplastic (CHLM) from Arabidopsis thaliana (Mouse-ear cress).